Consider the following 312-residue polypeptide: Acetyl-coenzyme A carboxylase carboxyl transferase subunit alpha (312 aa).

In terms of domain architecture, CoA carboxyltransferase C-terminal spans 36–286 (RLDKEVKSIY…KEYFLDALRT (251 aa)).

This sequence belongs to the AccA family. As to quaternary structure, acetyl-CoA carboxylase is a heterohexamer composed of biotin carboxyl carrier protein (AccB), biotin carboxylase (AccC) and two subunits each of ACCase subunit alpha (AccA) and ACCase subunit beta (AccD).

The protein localises to the cytoplasm. The catalysed reaction is N(6)-carboxybiotinyl-L-lysyl-[protein] + acetyl-CoA = N(6)-biotinyl-L-lysyl-[protein] + malonyl-CoA. It participates in lipid metabolism; malonyl-CoA biosynthesis; malonyl-CoA from acetyl-CoA: step 1/1. Functionally, component of the acetyl coenzyme A carboxylase (ACC) complex. First, biotin carboxylase catalyzes the carboxylation of biotin on its carrier protein (BCCP) and then the CO(2) group is transferred by the carboxyltransferase to acetyl-CoA to form malonyl-CoA. This is Acetyl-coenzyme A carboxylase carboxyl transferase subunit alpha from Helicobacter pylori (strain G27).